A 667-amino-acid chain; its full sequence is Protein angel homolog 1 (667 aa).

Residues Ser-77 and Ser-105 each carry the phosphoserine modification.

The protein belongs to the CCR4/nocturin family.

This is Protein angel homolog 1 from Rattus norvegicus (Rat).